The chain runs to 288 residues: Centromere protein P (288 aa).

Residues 1-71 (MDAELAEVRA…HLESELSFLS (71 aa)) adopt a coiled-coil conformation. The residue at position 38 (serine 38) is a Phosphoserine.

It belongs to the CENP-P/CTF19 family. In terms of assembly, component of the CENPA-CAD complex, composed of CENPI, CENPK, CENPL, CENPO, CENPP, CENPQ, CENPR and CENPS. The CENPA-CAD complex interacts with the CENPA-NAC complex, at least composed of CENPA, CENPC, CENPH, CENPM, CENPN, CENPT and CENPU.

It is found in the nucleus. The protein resides in the chromosome. Its subcellular location is the centromere. Component of the CENPA-CAD (nucleosome distal) complex, a complex recruited to centromeres which is involved in assembly of kinetochore proteins, mitotic progression and chromosome segregation. May be involved in incorporation of newly synthesized CENPA into centromeres via its interaction with the CENPA-NAC complex. This Homo sapiens (Human) protein is Centromere protein P (CENPP).